Here is a 347-residue protein sequence, read N- to C-terminus: Biotin synthase (347 aa).

The Radical SAM core domain occupies 54–273; sequence NHVETASLLS…IAVARIMMPK (220 aa). Residues Cys-69, Cys-73, and Cys-76 each coordinate [4Fe-4S] cluster. [2Fe-2S] cluster is bound by residues Cys-113, Cys-144, Cys-204, and Arg-277.

It belongs to the radical SAM superfamily. Biotin synthase family. Homodimer. [4Fe-4S] cluster is required as a cofactor. The cofactor is [2Fe-2S] cluster.

The enzyme catalyses (4R,5S)-dethiobiotin + (sulfur carrier)-SH + 2 reduced [2Fe-2S]-[ferredoxin] + 2 S-adenosyl-L-methionine = (sulfur carrier)-H + biotin + 2 5'-deoxyadenosine + 2 L-methionine + 2 oxidized [2Fe-2S]-[ferredoxin]. It participates in cofactor biosynthesis; biotin biosynthesis; biotin from 7,8-diaminononanoate: step 2/2. Catalyzes the conversion of dethiobiotin (DTB) to biotin by the insertion of a sulfur atom into dethiobiotin via a radical-based mechanism. This Afipia carboxidovorans (strain ATCC 49405 / DSM 1227 / KCTC 32145 / OM5) (Oligotropha carboxidovorans) protein is Biotin synthase.